A 381-amino-acid chain; its full sequence is Alkanesulfonate monooxygenase (381 aa).

Belongs to the SsuD family. In terms of assembly, homotetramer.

It catalyses the reaction an alkanesulfonate + FMNH2 + O2 = an aldehyde + FMN + sulfite + H2O + 2 H(+). In terms of biological role, catalyzes the desulfonation of aliphatic sulfonates. This is Alkanesulfonate monooxygenase from Shigella flexneri.